Reading from the N-terminus, the 69-residue chain is Putative membrane protein insertion efficiency factor (69 aa).

The protein belongs to the UPF0161 family.

Its subcellular location is the cell membrane. Could be involved in insertion of integral membrane proteins into the membrane. The polypeptide is Putative membrane protein insertion efficiency factor (Clostridium perfringens (strain SM101 / Type A)).